A 565-amino-acid polypeptide reads, in one-letter code: NAD-dependent malic enzyme (565 aa).

Tyr-103 acts as the Proton donor in catalysis. Catalysis depends on Lys-177, which acts as the Proton acceptor. Glu-248, Asp-249, and Asp-272 together coordinate a divalent metal cation. Positions 272 and 419 each coordinate NAD(+). Ser-445 carries the post-translational modification Phosphoserine.

This sequence belongs to the malic enzymes family. Mg(2+) is required as a cofactor. The cofactor is Mn(2+).

It catalyses the reaction (S)-malate + NAD(+) = pyruvate + CO2 + NADH. It carries out the reaction oxaloacetate + H(+) = pyruvate + CO2. The chain is NAD-dependent malic enzyme (mae2) from Schizosaccharomyces pombe (strain 972 / ATCC 24843) (Fission yeast).